The chain runs to 184 residues: MAILSDKWIRDKALNEGMIEPFVENQRRDGCISYGLSSYGYDARVAPEFKIFTNVDSAVVDPKDFASNSFVDRETDVCVIPPNSFALARTVEYFRVPRDVLVICLGKSTYARCGIIVNVTPLEPGWEGHVTLEFSNTTPLPAKIYANEGACQFLFLQGNEPCEVSYADRAGKYMGQRGVTLPRL.

Residues 107–112 (KSTYAR), 131–133 (TLE), glutamine 152, tyrosine 166, and glutamine 176 each bind dCTP. Catalysis depends on glutamate 133, which acts as the Proton donor/acceptor.

The protein belongs to the dCTP deaminase family. In terms of assembly, homotrimer.

It carries out the reaction dCTP + H2O + H(+) = dUTP + NH4(+). It participates in pyrimidine metabolism; dUMP biosynthesis; dUMP from dCTP (dUTP route): step 1/2. Its function is as follows. Catalyzes the deamination of dCTP to dUTP. The chain is dCTP deaminase from Novosphingobium aromaticivorans (strain ATCC 700278 / DSM 12444 / CCUG 56034 / CIP 105152 / NBRC 16084 / F199).